We begin with the raw amino-acid sequence, 225 residues long: NAD(P)H-quinone oxidoreductase subunit K, chloroplastic (225 aa).

Residues Cys43, Cys44, Cys108, and Cys139 each contribute to the [4Fe-4S] cluster site.

Belongs to the complex I 20 kDa subunit family. In terms of assembly, NDH is composed of at least 16 different subunits, 5 of which are encoded in the nucleus. It depends on [4Fe-4S] cluster as a cofactor.

The protein resides in the plastid. Its subcellular location is the chloroplast thylakoid membrane. The catalysed reaction is a plastoquinone + NADH + (n+1) H(+)(in) = a plastoquinol + NAD(+) + n H(+)(out). It carries out the reaction a plastoquinone + NADPH + (n+1) H(+)(in) = a plastoquinol + NADP(+) + n H(+)(out). NDH shuttles electrons from NAD(P)H:plastoquinone, via FMN and iron-sulfur (Fe-S) centers, to quinones in the photosynthetic chain and possibly in a chloroplast respiratory chain. The immediate electron acceptor for the enzyme in this species is believed to be plastoquinone. Couples the redox reaction to proton translocation, and thus conserves the redox energy in a proton gradient. This Vitis vinifera (Grape) protein is NAD(P)H-quinone oxidoreductase subunit K, chloroplastic.